A 251-amino-acid polypeptide reads, in one-letter code: Octanoyltransferase (251 aa).

The BPL/LPL catalytic domain maps to 29–251 (AATPNSLWIC…GQKLSSYLAP (223 aa)). 68–75 (RGGQVTYH) is a substrate binding site. The segment at 137-174 (ARLRPSPQPSPKGRGSSTPVLLPPLPGEGGGGGGPDPD) is disordered. Residues 184 to 186 (ALG) and 197 to 199 (GVA) contribute to the substrate site. The active-site Acyl-thioester intermediate is the Cys-215.

This sequence belongs to the LipB family.

It localises to the cytoplasm. The catalysed reaction is octanoyl-[ACP] + L-lysyl-[protein] = N(6)-octanoyl-L-lysyl-[protein] + holo-[ACP] + H(+). It functions in the pathway protein modification; protein lipoylation via endogenous pathway; protein N(6)-(lipoyl)lysine from octanoyl-[acyl-carrier-protein]: step 1/2. In terms of biological role, catalyzes the transfer of endogenously produced octanoic acid from octanoyl-acyl-carrier-protein onto the lipoyl domains of lipoate-dependent enzymes. Lipoyl-ACP can also act as a substrate although octanoyl-ACP is likely to be the physiological substrate. This is Octanoyltransferase from Polaromonas sp. (strain JS666 / ATCC BAA-500).